A 254-amino-acid chain; its full sequence is Imidazole glycerol phosphate synthase subunit HisF (254 aa).

Residues aspartate 11 and aspartate 130 contribute to the active site.

The protein belongs to the HisA/HisF family. In terms of assembly, heterodimer of HisH and HisF.

It localises to the cytoplasm. The enzyme catalyses 5-[(5-phospho-1-deoxy-D-ribulos-1-ylimino)methylamino]-1-(5-phospho-beta-D-ribosyl)imidazole-4-carboxamide + L-glutamine = D-erythro-1-(imidazol-4-yl)glycerol 3-phosphate + 5-amino-1-(5-phospho-beta-D-ribosyl)imidazole-4-carboxamide + L-glutamate + H(+). The protein operates within amino-acid biosynthesis; L-histidine biosynthesis; L-histidine from 5-phospho-alpha-D-ribose 1-diphosphate: step 5/9. In terms of biological role, IGPS catalyzes the conversion of PRFAR and glutamine to IGP, AICAR and glutamate. The HisF subunit catalyzes the cyclization activity that produces IGP and AICAR from PRFAR using the ammonia provided by the HisH subunit. This chain is Imidazole glycerol phosphate synthase subunit HisF, found in Microcystis aeruginosa (strain NIES-843 / IAM M-2473).